The sequence spans 138 residues: Nanos homolog 2 (138 aa).

Residues 31–55 (ETQEIEEPSPGPPLGQDQGLGAPGA) are disordered. Residues 62 to 116 (LCNFCKHNGESRHVYSSHQLKTPDGVVVCPILRHYVCPVCGATGDQAHTLKYCPL) form a Nanos-type zinc finger. The Zn(2+) site is built by Cys63, Cys66, His79, Cys90, Cys98, Cys101, His109, and Cys114. 2 short sequence motifs (C2HC) span residues 63 to 90 (CNFC…VVVC) and 98 to 114 (CPVC…LKYC).

It belongs to the nanos family. In terms of assembly, interacts with CNOT1, CNOT3, CNOT6L, CNOT7 and CNOT9. As to expression, testis and ovary. Expression found in several spermatogenic stages: in cells on the periphery of the tubules which could correspond to spermatogonia, in spermatocytes and in round spermatids (at protein level).

It is found in the cytoplasm. The protein localises to the P-body. Its subcellular location is the perinuclear region. Plays a key role in the sexual differentiation of germ cells by promoting the male fate but suppressing the female fate. Represses the female fate pathways by suppressing meiosis, which in turn results in the promotion of the male fate. Maintains the suppression of meiosis by preventing STRA8 expression, which is required for premeiotic DNA replication, after CYP26B1 is decreased. Regulates the localization of the CCR4-NOT deadenylation complex to P-bodies and plays a role in recruiting the complex to trigger the degradation of mRNAs involved in meiosis. Required for the maintenance of the spermatogonial stem cell population. Not essential for the assembly of P-bodies but is required for the maintenance of their normal state. The polypeptide is Nanos homolog 2 (NANOS2) (Homo sapiens (Human)).